A 276-amino-acid polypeptide reads, in one-letter code: Secreted RxLR effector protein 120 (276 aa).

The first 21 residues, 1–21, serve as a signal peptide directing secretion; the sequence is MRGAYYVITALLVVASSQTSA. The RxLR-dEER signature appears at 48 to 65; sequence QSLRGSRDVPDDLAHEER. The tract at residues 97–130 is disordered; that stretch reads GKRPRVAEKDALEKASGADEASKKPRNTATDDAF. The span at 101 to 119 shows a compositional bias: basic and acidic residues; sequence RVAEKDALEKASGADEASK.

It belongs to the RxLR effector family.

Its subcellular location is the secreted. It is found in the host nucleus. Functionally, secreted effector that completely suppresses the host cell death induced by cell death-inducing proteins. The protein is Secreted RxLR effector protein 120 of Plasmopara viticola (Downy mildew of grapevine).